A 707-amino-acid chain; its full sequence is Trans-feruloyl-CoA synthase FCS1 (707 aa).

Residues His-267 and 524–535 (ARAIGYPVVMKA) contribute to the ATP site. The 52-residue stretch at 498–549 (KELLRPLGIAFPPSQFAANAEAAAAAARAIGYPVVMKAQAAALGHKSDAGGV) folds into the ATP-grasp domain.

It in the N-terminal section; belongs to the acetate CoA ligase alpha subunit family. In the C-terminal section; belongs to the acetate CoA ligase beta subunit family. As to quaternary structure, homodimer.

It carries out the reaction (E)-ferulate + ATP + CoA = (E)-feruloyl-CoA + ADP + phosphate. In terms of biological role, catalyzes the formation of feruloyl-CoA, ADP and phosphate from ferulate, CoA and ATP. This chain is Trans-feruloyl-CoA synthase FCS1, found in Unknown prokaryotic organism.